We begin with the raw amino-acid sequence, 641 residues long: 1-deoxy-D-xylulose-5-phosphate synthase (641 aa).

Thiamine diphosphate contacts are provided by residues H79 and 120 to 122 (AHS). D151 is a binding site for Mg(2+). Thiamine diphosphate is bound by residues 152–153 (GS), N180, Y290, and E372. Position 180 (N180) interacts with Mg(2+).

It belongs to the transketolase family. DXPS subfamily. In terms of assembly, homodimer. Requires Mg(2+) as cofactor. The cofactor is thiamine diphosphate.

The catalysed reaction is D-glyceraldehyde 3-phosphate + pyruvate + H(+) = 1-deoxy-D-xylulose 5-phosphate + CO2. The protein operates within metabolic intermediate biosynthesis; 1-deoxy-D-xylulose 5-phosphate biosynthesis; 1-deoxy-D-xylulose 5-phosphate from D-glyceraldehyde 3-phosphate and pyruvate: step 1/1. Functionally, catalyzes the acyloin condensation reaction between C atoms 2 and 3 of pyruvate and glyceraldehyde 3-phosphate to yield 1-deoxy-D-xylulose-5-phosphate (DXP). The polypeptide is 1-deoxy-D-xylulose-5-phosphate synthase (Rhodopseudomonas palustris (strain BisB18)).